Here is a 255-residue protein sequence, read N- to C-terminus: Acetyl-coenzyme A carboxylase carboxyl transferase subunit alpha (255 aa).

Residues 1–235 form the CoA carboxyltransferase C-terminal domain; the sequence is MNIAKIVREA…KKELQTELAR (235 aa).

The protein belongs to the AccA family. In terms of assembly, acetyl-CoA carboxylase is a heterohexamer composed of biotin carboxyl carrier protein (AccB), biotin carboxylase (AccC) and two subunits each of ACCase subunit alpha (AccA) and ACCase subunit beta (AccD).

It is found in the cytoplasm. The enzyme catalyses N(6)-carboxybiotinyl-L-lysyl-[protein] + acetyl-CoA = N(6)-biotinyl-L-lysyl-[protein] + malonyl-CoA. It functions in the pathway lipid metabolism; malonyl-CoA biosynthesis; malonyl-CoA from acetyl-CoA: step 1/1. Functionally, component of the acetyl coenzyme A carboxylase (ACC) complex. First, biotin carboxylase catalyzes the carboxylation of biotin on its carrier protein (BCCP) and then the CO(2) group is transferred by the carboxyltransferase to acetyl-CoA to form malonyl-CoA. The sequence is that of Acetyl-coenzyme A carboxylase carboxyl transferase subunit alpha from Streptococcus pneumoniae serotype 19F (strain G54).